Here is a 221-residue protein sequence, read N- to C-terminus: Josephin-like protein (221 aa).

Residues 1-37 (MESPSARTLGNSLGDDSGNGNENGNGSGNGNTTMMPH) are disordered. Residues 9–20 (LGNSLGDDSGNG) are compositionally biased toward low complexity. The region spanning 36–214 (PHGIYHERQT…DCKDKSQQRW (179 aa)) is the Josephin domain. Cys49 serves as the catalytic Nucleophile. His152 (proton acceptor) is an active-site residue.

It catalyses the reaction Thiol-dependent hydrolysis of ester, thioester, amide, peptide and isopeptide bonds formed by the C-terminal Gly of ubiquitin (a 76-residue protein attached to proteins as an intracellular targeting signal).. Its function is as follows. May act as a deubiquitinating enzyme. This chain is Josephin-like protein, found in Drosophila melanogaster (Fruit fly).